Reading from the N-terminus, the 433-residue chain is Enolase (433 aa).

Gln167 is a binding site for (2R)-2-phosphoglycerate. The active-site Proton donor is Glu209. The Mg(2+) site is built by Asp246, Glu291, and Asp318. (2R)-2-phosphoglycerate-binding residues include Lys343, Arg372, Ser373, and Lys394. Catalysis depends on Lys343, which acts as the Proton acceptor.

The protein belongs to the enolase family. As to quaternary structure, component of the RNA degradosome, a multiprotein complex involved in RNA processing and mRNA degradation. Mg(2+) serves as cofactor.

It is found in the cytoplasm. The protein localises to the secreted. It localises to the cell surface. It catalyses the reaction (2R)-2-phosphoglycerate = phosphoenolpyruvate + H2O. It functions in the pathway carbohydrate degradation; glycolysis; pyruvate from D-glyceraldehyde 3-phosphate: step 4/5. Its function is as follows. Catalyzes the reversible conversion of 2-phosphoglycerate (2-PG) into phosphoenolpyruvate (PEP). It is essential for the degradation of carbohydrates via glycolysis. The protein is Enolase of Photorhabdus laumondii subsp. laumondii (strain DSM 15139 / CIP 105565 / TT01) (Photorhabdus luminescens subsp. laumondii).